We begin with the raw amino-acid sequence, 110 residues long: MSCQQSQQQCQPPPKCTPKCPPKCPTPKCPPKCPPKCPPVSSCCSVSSGGCCGSSSGGGCSSGGGGCCLSHHRRHRSHRHRLQSSGCCSQPSGGSSCCGGDSGQHSGGCC.

Over residues Met-1–Cys-10 the composition is skewed to low complexity. 2 disordered regions span residues Met-1 to Lys-23 and Gln-83 to Cys-110. Pro residues predominate over residues Gln-11–Lys-23. Low complexity predominate over residues Gln-83 to Ser-95. Over residues Ser-96 to Cys-110 the composition is skewed to gly residues.

It belongs to the LCE family. In terms of assembly, interacts with CYSRT1. In terms of tissue distribution, skin-specific. Expression was readily detected in adult trunk skin, adult arm skin, fetal skin, penal skin, vulva, esophagus and tongue. Not expressed in the cervix, rectum, lung, colon, or placenta.

Its function is as follows. Precursors of the cornified envelope of the stratum corneum. The chain is Late cornified envelope protein 1A (LCE1A) from Homo sapiens (Human).